The primary structure comprises 311 residues: MQQDPSISSKQKSTAVIKMVISMVIFGSIGFFSEHTNLPSFELVFVRCLCATLFLGFCWLASGQYKTEKWSKRDVLQTLACGFFLVFNWVFLFKSFEETSVTIAISVYHLAPVLVLLLGSFFYREKLNVISVSSIIICFLGTALISGINGSTSLTQLMGSGIIWAVLAALFYAFTTLLGKGIHNLSPYTTTFLQTGLGVIILIPFIHFGAFADLSQGNWIMVVSTGIIHTGIVYLLFFDSLRFLSTKFISIIVFLDPAVAIVLDTVFTGFRPDLYQTLGIVMIFAGMALTLVRRQGKANVTAEGTDIEQIQ.

10 helical membrane passes run 13–33 (STAV…GFFS), 41–61 (FELV…CWLA), 76–96 (LQTL…FKSF), 103–123 (IAIS…SFFY), 128–148 (NVIS…ISGI), 157–177 (LMGS…FTTL), 192–212 (FLQT…GAFA), 218–238 (NWIM…LLFF), 248–268 (FISI…TVFT), and 272–292 (PDLY…LTLV). 2 consecutive EamA domains span residues 24 to 147 (VIFG…LISG) and 166 to 292 (VLAA…LTLV).

Belongs to the EamA transporter family.

The protein localises to the cell membrane. This is an uncharacterized protein from Bacillus subtilis (strain 168).